We begin with the raw amino-acid sequence, 288 residues long: Type II restriction enzyme DpnII (288 aa).

Belongs to the DpnII type II restriction endonuclease family. Homodimer.

It carries out the reaction Endonucleolytic cleavage of DNA to give specific double-stranded fragments with terminal 5'-phosphates.. A P subtype restriction enzyme that recognizes the double-stranded unmethylated sequence 5'-GATC-3' and cleaves before G-1. The protein is Type II restriction enzyme DpnII of Streptococcus pneumoniae.